The primary structure comprises 188 residues: Pro-adrenomedullin (188 aa).

The N-terminal stretch at 1–21 (MKLVPVALMYLGSLAFLGADT) is a signal peptide. Residue Arg41 is modified to Arginine amide. Residues 45–92 (ELRLSSSYPTGIADLKAGPAQTVIRPQDVKGSSRSPQASIPDAARIRV) constitute a propeptide that is removed on maturation. A disulfide bridge connects residues Cys110 and Cys115. Residues 131 to 177 (DKDGVAPRSKISPQGYGRRRRRSLPEASLGRTLRSQEPQAHGAPASP) form a disordered region. Position 146 is a tyrosine amide (Tyr146). Residues 153-188 (SLPEASLGRTLRSQEPQAHGAPASPAHQVLATLFRI) constitute a propeptide, preproAM C-terminal fragment.

The protein belongs to the adrenomedullin family. Highly expressed in adrenal glands, lung and kidney.

It localises to the secreted. Adrenomedullin/ADM and proadrenomedullin N-20 terminal peptide/PAMP are peptide hormones that act as potent hypotensive and vasodilatator agents. Numerous actions have been reported most related to the physiologic control of fluid and electrolyte homeostasis. Functionally, ADM function is mediated by the CALCRL-RAMP2 and CALCRL-RAMP3 receptor complexes with ADM showing the highest potency for the CALCRL-RAMP2 complex. This Sus scrofa (Pig) protein is Pro-adrenomedullin (ADM).